A 146-amino-acid polypeptide reads, in one-letter code: Phospholipase A2 (146 aa).

The signal sequence occupies residues 1–18 (MAFLVFAFLTLMAVETYG). Cystine bridges form between Cys-44–Cys-137, Cys-46–Cys-62, Cys-61–Cys-117, Cys-67–Cys-144, Cys-68–Cys-110, Cys-77–Cys-103, and Cys-95–Cys-108. 3 residues coordinate Ca(2+): Tyr-45, Gly-47, and Gly-49. Residue His-65 is part of the active site. Asp-66 is a Ca(2+) binding site. The N-linked (GlcNAc...) asparagine glycan is linked to Asn-85. Residue Asp-111 is part of the active site. An N-linked (GlcNAc...) asparagine glycan is attached at Asn-126.

The cofactor is Ca(2+). N-glycosylated. Glycosylated with mannose chains including Man2(GlcNAc), Man2(GlcNAc)2, Man2(GlcNAc)3, Man2(GlcNAc)4 and Man2(GlcNAc)5. Expressed by the skin glands (at protein level).

The protein localises to the secreted. The catalysed reaction is a 1,2-diacyl-sn-glycero-3-phosphocholine + H2O = a 1-acyl-sn-glycero-3-phosphocholine + a fatty acid + H(+). Its function is as follows. PLA2 catalyzes the calcium-dependent hydrolysis of the 2-acyl groups in 3-sn-phosphoglycerides. The protein is Phospholipase A2 of Pithecopus azureus (Orange-legged monkey tree frog).